Reading from the N-terminus, the 1073-residue chain is Semaphorin-6D (1073 aa).

The first 20 residues, methionine 1–alanine 20, serve as a signal peptide directing secretion. The Extracellular portion of the chain corresponds to valine 21–asparagine 662. The 486-residue stretch at aspartate 27–leucine 512 folds into the Sema domain. Asparagine 51 is a glycosylation site (N-linked (GlcNAc...) asparagine). 4 disulfide bridges follow: cysteine 108-cysteine 118, cysteine 136-cysteine 145, cysteine 259-cysteine 370, and cysteine 284-cysteine 329. A glycan (N-linked (GlcNAc...) asparagine) is linked at asparagine 283. N-linked (GlcNAc...) asparagine glycosylation is found at asparagine 435 and asparagine 461. 4 disulfide bridges follow: cysteine 477–cysteine 506, cysteine 515–cysteine 533, cysteine 521–cysteine 568, and cysteine 525–cysteine 541. Residues arginine 514 to histidine 569 form the PSI domain. Residue asparagine 631 is glycosylated (N-linked (GlcNAc...) asparagine). The helical transmembrane segment at valine 663–valine 683 threads the bilayer. Residues tyrosine 684–tyrosine 1073 are Cytoplasmic-facing. Serine 723, serine 734, and serine 744 each carry phosphoserine. Disordered regions lie at residues arginine 745–proline 825, threonine 839–arginine 876, proline 919–glycine 986, and leucine 1021–tyrosine 1073. Residue threonine 773 is modified to Phosphothreonine. Basic and acidic residues predominate over residues serine 790–proline 806. Phosphoserine is present on residues serine 931, serine 957, and serine 983. The span at serine 931 to threonine 942 shows a compositional bias: polar residues. Polar residues-rich tracts occupy residues leucine 1021–leucine 1037 and valine 1059–tyrosine 1073.

It belongs to the semaphorin family. In terms of tissue distribution, expressed in brain and lung.

The protein resides in the cell membrane. In terms of biological role, shows growth cone collapsing activity on dorsal root ganglion (DRG) neurons in vitro. May be a stop signal for the DRG neurons in their target areas, and possibly also for other neurons. May also be involved in the maintenance and remodeling of neuronal connections. Ligand of TREM2 with PLXNA1 as coreceptor in dendritic cells, plays a role in the generation of immune responses and skeletal homeostasis. The sequence is that of Semaphorin-6D (Sema6d) from Mus musculus (Mouse).